Consider the following 102-residue polypeptide: Co-chaperonin GroES (102 aa).

It belongs to the GroES chaperonin family. Heptamer of 7 subunits arranged in a ring. Interacts with the chaperonin GroEL.

The protein resides in the cytoplasm. Together with the chaperonin GroEL, plays an essential role in assisting protein folding. The GroEL-GroES system forms a nano-cage that allows encapsulation of the non-native substrate proteins and provides a physical environment optimized to promote and accelerate protein folding. GroES binds to the apical surface of the GroEL ring, thereby capping the opening of the GroEL channel. The sequence is that of Co-chaperonin GroES from Anabaena sp. (strain L31).